We begin with the raw amino-acid sequence, 299 residues long: Bifunctional protein FolD 2 (299 aa).

NADP(+) contacts are provided by residues 168–170 (GRS), Ser193, and Ile234.

It belongs to the tetrahydrofolate dehydrogenase/cyclohydrolase family. Homodimer.

The catalysed reaction is (6R)-5,10-methylene-5,6,7,8-tetrahydrofolate + NADP(+) = (6R)-5,10-methenyltetrahydrofolate + NADPH. It catalyses the reaction (6R)-5,10-methenyltetrahydrofolate + H2O = (6R)-10-formyltetrahydrofolate + H(+). It functions in the pathway one-carbon metabolism; tetrahydrofolate interconversion. In terms of biological role, catalyzes the oxidation of 5,10-methylenetetrahydrofolate to 5,10-methenyltetrahydrofolate and then the hydrolysis of 5,10-methenyltetrahydrofolate to 10-formyltetrahydrofolate. In Rhizobium etli (strain ATCC 51251 / DSM 11541 / JCM 21823 / NBRC 15573 / CFN 42), this protein is Bifunctional protein FolD 2.